The following is a 550-amino-acid chain: Glucose-6-phosphate isomerase (550 aa).

The active-site Proton donor is E356. Residues H387 and K515 contribute to the active site.

It belongs to the GPI family.

It is found in the cytoplasm. The enzyme catalyses alpha-D-glucose 6-phosphate = beta-D-fructose 6-phosphate. It functions in the pathway carbohydrate biosynthesis; gluconeogenesis. Its pathway is carbohydrate degradation; glycolysis; D-glyceraldehyde 3-phosphate and glycerone phosphate from D-glucose: step 2/4. In terms of biological role, catalyzes the reversible isomerization of glucose-6-phosphate to fructose-6-phosphate. This chain is Glucose-6-phosphate isomerase, found in Vibrio atlanticus (strain LGP32) (Vibrio splendidus (strain Mel32)).